The following is a 218-amino-acid chain: Glutathione S-transferase Mu 1 (218 aa).

A GST N-terminal domain is found at 2–88 (PMILGYWDIR…YIARKHNLCG (87 aa)). Residues 7 to 8 (YW), 43 to 46 (RSQW), lysine 50, 59 to 60 (NL), and 72 to 73 (QS) contribute to the glutathione site. The 119-residue stretch at 90 to 208 (TEEEMIRVDI…KSSRFLPGPL (119 aa)) folds into the GST C-terminal domain. Tyrosine 116 serves as a coordination point for substrate.

Belongs to the GST superfamily. Mu family. As to quaternary structure, homodimer.

It localises to the cytoplasm. It carries out the reaction RX + glutathione = an S-substituted glutathione + a halide anion + H(+). The enzyme catalyses prostaglandin A2 + glutathione = prostaglandin A2-S-(R)-glutathione. It catalyses the reaction prostaglandin J2 + glutathione = prostaglandin J2-S-(R)-glutathione. The catalysed reaction is prostaglandin J2 + glutathione = prostaglandin J2-S-(S)-glutathione. It carries out the reaction prostaglandin A2 + glutathione = prostaglandin A2-S-(S)-glutathione. The enzyme catalyses 11(S)-hydroxy-14(S),15(S)-epoxy-(5Z,8Z,12E)-eicosatrienoate + glutathione = (11S,15S)-dihydroxy-14(R)-S-glutathionyl-(5Z,8Z,12E)-eicosatrienoate. In terms of biological role, conjugation of reduced glutathione to a wide number of exogenous and endogenous hydrophobic electrophiles. Protects against the thiol-mediated metal-catalyzed oxidative inactivation of enzymes. Involved in the formation of glutathione conjugates of both prostaglandin A2 (PGA2) and prostaglandin J2 (PGJ2). Participates in the formation of novel hepoxilin regioisomers. The polypeptide is Glutathione S-transferase Mu 1 (GSTM1) (Bos taurus (Bovine)).